Here is a 611-residue protein sequence, read N- to C-terminus: Angiotensin-converting enzyme (611 aa).

A signal peptide spans 1–17; it reads MKLLVVTILAGLAVCHG. One can recognise a Peptidase M2 domain in the interval 19–607; it reads TKEEIVATEY…VESLCHQRYK (589 aa). A glycan (N-linked (GlcNAc...) asparagine) is linked at N53. The cysteines at positions 133 and 141 are disulfide-linked. Residue N196 is glycosylated (N-linked (GlcNAc...) asparagine). C336 and C354 are joined by a disulfide. H367 is a Zn(2+) binding site. E368 (proton acceptor) is an active-site residue. Residues H371 and E395 each coordinate Zn(2+). H497 acts as the Proton donor in catalysis. C522 and C540 are oxidised to a cystine. An N-linked (GlcNAc...) asparagine glycan is attached at N531.

The protein belongs to the peptidase M2 family. Zn(2+) is required as a cofactor. In terms of tissue distribution, expressed in the compound ganglion and in the posterior region of the midgut.

The protein resides in the secreted. It is found in the extracellular space. It catalyses the reaction Release of a C-terminal dipeptide, oligopeptide-|-Xaa-Yaa, when Xaa is not Pro, and Yaa is neither Asp nor Glu. Thus, conversion of angiotensin I to angiotensin II, with increase in vasoconstrictor activity, but no action on angiotensin II.. Involved in the specific maturation or degradation of a number of bioactive peptides. The protein is Angiotensin-converting enzyme (ACE) of Haematobia irritans exigua (Buffalo fly).